The following is a 395-amino-acid chain: Ribosomal RNA small subunit methyltransferase H (395 aa).

S-adenosyl-L-methionine-binding positions include 101 to 103 (GGH), Asp120, Tyr147, Asp171, and Gln178.

Belongs to the methyltransferase superfamily. RsmH family.

The protein localises to the cytoplasm. The catalysed reaction is cytidine(1402) in 16S rRNA + S-adenosyl-L-methionine = N(4)-methylcytidine(1402) in 16S rRNA + S-adenosyl-L-homocysteine + H(+). Functionally, specifically methylates the N4 position of cytidine in position 1402 (C1402) of 16S rRNA. The protein is Ribosomal RNA small subunit methyltransferase H of Mycobacterium ulcerans (strain Agy99).